A 340-amino-acid chain; its full sequence is Phenylalanine--tRNA ligase alpha subunit (340 aa).

Position 254 (Glu-254) interacts with Mg(2+).

The protein belongs to the class-II aminoacyl-tRNA synthetase family. Phe-tRNA synthetase alpha subunit type 1 subfamily. Tetramer of two alpha and two beta subunits. Requires Mg(2+) as cofactor.

It localises to the cytoplasm. It catalyses the reaction tRNA(Phe) + L-phenylalanine + ATP = L-phenylalanyl-tRNA(Phe) + AMP + diphosphate + H(+). In Caldicellulosiruptor bescii (strain ATCC BAA-1888 / DSM 6725 / KCTC 15123 / Z-1320) (Anaerocellum thermophilum), this protein is Phenylalanine--tRNA ligase alpha subunit.